A 534-amino-acid polypeptide reads, in one-letter code: Peptide chain release factor 3 (534 aa).

In terms of domain architecture, tr-type G spans 9–278 (ARRRTFAIIS…FFIEHAPPPQ (270 aa)). GTP contacts are provided by residues 18–25 (SHPDAGKT), 86–90 (DTPGH), and 140–143 (NKLD).

It belongs to the TRAFAC class translation factor GTPase superfamily. Classic translation factor GTPase family. PrfC subfamily.

The protein resides in the cytoplasm. Functionally, increases the formation of ribosomal termination complexes and stimulates activities of RF-1 and RF-2. It binds guanine nucleotides and has strong preference for UGA stop codons. It may interact directly with the ribosome. The stimulation of RF-1 and RF-2 is significantly reduced by GTP and GDP, but not by GMP. The polypeptide is Peptide chain release factor 3 (Xanthomonas oryzae pv. oryzae (strain PXO99A)).